Here is an 86-residue protein sequence, read N- to C-terminus: Exodeoxyribonuclease 7 small subunit (86 aa).

The protein belongs to the XseB family. As to quaternary structure, heterooligomer composed of large and small subunits.

Its subcellular location is the cytoplasm. It catalyses the reaction Exonucleolytic cleavage in either 5'- to 3'- or 3'- to 5'-direction to yield nucleoside 5'-phosphates.. Bidirectionally degrades single-stranded DNA into large acid-insoluble oligonucleotides, which are then degraded further into small acid-soluble oligonucleotides. In Xanthomonas axonopodis pv. citri (strain 306), this protein is Exodeoxyribonuclease 7 small subunit.